Reading from the N-terminus, the 467-residue chain is Trigger factor (467 aa).

The 88-residue stretch at 174–261 (SDIAILTFKG…LQDLKTRELP (88 aa)) folds into the PPIase FKBP-type domain. Residues 439–467 (PKKALNEKVKSSKPKNTQKKTDKTKKDSP) form a disordered region. Residues 457-467 (KKTDKTKKDSP) show a composition bias toward basic and acidic residues.

This sequence belongs to the FKBP-type PPIase family. Tig subfamily.

Its subcellular location is the cytoplasm. The catalysed reaction is [protein]-peptidylproline (omega=180) = [protein]-peptidylproline (omega=0). Involved in protein export. Acts as a chaperone by maintaining the newly synthesized protein in an open conformation. Functions as a peptidyl-prolyl cis-trans isomerase. This chain is Trigger factor, found in Prochlorococcus marinus (strain SARG / CCMP1375 / SS120).